The primary structure comprises 530 residues: 4-alpha-glucanotransferase (530 aa).

This sequence belongs to the disproportionating enzyme family.

It localises to the cytoplasm. It carries out the reaction Transfers a segment of a (1-&gt;4)-alpha-D-glucan to a new position in an acceptor, which may be glucose or a (1-&gt;4)-alpha-D-glucan.. This Chlamydia caviae (strain ATCC VR-813 / DSM 19441 / 03DC25 / GPIC) (Chlamydophila caviae) protein is 4-alpha-glucanotransferase (malQ).